Here is a 108-residue protein sequence, read N- to C-terminus: Nitrite reductase (NADH) small subunit (108 aa).

The protein to B.subtilis NasE. As to quaternary structure, associates with NirB.

Its subcellular location is the cytoplasm. The catalysed reaction is NH4(+) + 3 NAD(+) + 2 H2O = nitrite + 3 NADH + 5 H(+). In terms of biological role, required for activity of the reductase. This chain is Nitrite reductase (NADH) small subunit (nirD), found in Escherichia coli O157:H7.